The sequence spans 43 residues: uncharacterized protein (43 aa).

A helical transmembrane segment spans residues Ser21–Phe41.

The protein belongs to the SscA family.

It localises to the membrane. This is an uncharacterized protein from Bacillus subtilis (strain 168).